Consider the following 89-residue polypeptide: Small ribosomal subunit protein uS15 (89 aa).

This sequence belongs to the universal ribosomal protein uS15 family. As to quaternary structure, part of the 30S ribosomal subunit. Forms a bridge to the 50S subunit in the 70S ribosome, contacting the 23S rRNA.

In terms of biological role, one of the primary rRNA binding proteins, it binds directly to 16S rRNA where it helps nucleate assembly of the platform of the 30S subunit by binding and bridging several RNA helices of the 16S rRNA. Its function is as follows. Forms an intersubunit bridge (bridge B4) with the 23S rRNA of the 50S subunit in the ribosome. This Phocaeicola vulgatus (strain ATCC 8482 / DSM 1447 / JCM 5826 / CCUG 4940 / NBRC 14291 / NCTC 11154) (Bacteroides vulgatus) protein is Small ribosomal subunit protein uS15.